The following is a 445-amino-acid chain: Probable histidine--tRNA ligase, cytoplasmic (445 aa).

This sequence belongs to the class-II aminoacyl-tRNA synthetase family.

The protein localises to the cytoplasm. It carries out the reaction tRNA(His) + L-histidine + ATP = L-histidyl-tRNA(His) + AMP + diphosphate + H(+). The polypeptide is Probable histidine--tRNA ligase, cytoplasmic (Antonospora locustae (Microsporidian parasite)).